Consider the following 467-residue polypeptide: Dimethylamine methyltransferase MtbB1 (467 aa).

Residue Pyl356 is a non-standard amino acid, pyrrolysine.

It belongs to the dimethylamine methyltransferase family. In terms of assembly, may form homotetramers or homopentamers.

It carries out the reaction Co(I)-[dimethylamine-specific corrinoid protein] + dimethylamine + H(+) = methyl-Co(III)-[dimethylamine-specific corrinoid protein] + methylamine. It participates in one-carbon metabolism; methanogenesis from dimethylamine. Catalyzes the transfer of a methyl group from dimethylamine to the corrinoid cofactor of MtbC. The major or perhaps only DMA methyltransferase expressed under inducing conditions. This Methanosarcina barkeri protein is Dimethylamine methyltransferase MtbB1.